A 23-amino-acid chain; its full sequence is GCWICWGPNACCRGSVCHDYCPS.

3 disulfides stabilise this stretch: cysteine 2-cysteine 12, cysteine 5-cysteine 17, and cysteine 11-cysteine 21.

As to expression, expressed by the venom duct.

The protein resides in the secreted. This Californiconus californicus (California cone) protein is Conotoxin Cl6c.